We begin with the raw amino-acid sequence, 127 residues long: MSSKSELESLLNKIVKSNDETEVSKALKEIEDNNEYIEKKQLRSLLTMHDKKFKDQCLIPMNNLYVKYNDIVGKDRNLQNETAFVDRDIRVLESTLQYIIENKNSHNTNHGGCNKTKNSSKDKLLDK.

The disordered stretch occupies residues 103–127; sequence KNSHNTNHGGCNKTKNSSKDKLLDK. The span at 105–117 shows a compositional bias: polar residues; that stretch reads SHNTNHGGCNKTK.

It belongs to the BLOC1S1 family. As to quaternary structure, component of the biogenesis of lysosome-related organelles complex-1 (BLOC-1).

It is found in the endosome. In terms of biological role, component of the biogenesis of lysosome-related organelles complex-1 (BLOC-1), a complex involved in endosomal cargo sorting. The polypeptide is Biogenesis of lysosome-related organelles complex 1 subunit BLS1 (BLS1) (Vanderwaltozyma polyspora (strain ATCC 22028 / DSM 70294 / BCRC 21397 / CBS 2163 / NBRC 10782 / NRRL Y-8283 / UCD 57-17) (Kluyveromyces polysporus)).